A 369-amino-acid polypeptide reads, in one-letter code: Peptide chain release factor 2 (369 aa).

Glutamine 251 carries the N5-methylglutamine modification.

This sequence belongs to the prokaryotic/mitochondrial release factor family. Post-translationally, methylated by PrmC. Methylation increases the termination efficiency of RF2.

Its subcellular location is the cytoplasm. Peptide chain release factor 2 directs the termination of translation in response to the peptide chain termination codons UGA and UAA. This is Peptide chain release factor 2 (prfB) from Chlamydia pneumoniae (Chlamydophila pneumoniae).